We begin with the raw amino-acid sequence, 52 residues long: Large ribosomal subunit protein bL33 (52 aa).

The protein belongs to the bacterial ribosomal protein bL33 family.

This chain is Large ribosomal subunit protein bL33, found in Chlamydia trachomatis serovar L2 (strain ATCC VR-902B / DSM 19102 / 434/Bu).